Here is a 204-residue protein sequence, read N- to C-terminus: Putative 3-methyladenine DNA glycosylase (204 aa).

Belongs to the DNA glycosylase MPG family.

The polypeptide is Putative 3-methyladenine DNA glycosylase (Mycobacterium sp. (strain KMS)).